The chain runs to 992 residues: UPF0182 protein Mb3215c (992 aa).

Helical transmembrane passes span 17–39 (RILI…LIDA), 59–81 (LATR…FGGL), 113–135 (LVGI…SYWA), 169–191 (LMLS…AHYI), 212–229 (LVSL…AYWL), 255–277 (VLPA…FSAI), and 284–306 (IPAI…WPLI). Positions 906-938 (PTEAAVPPSPAANPPPPASGPQPPPVTAAPPVP) are disordered. Positions 912-938 (PPSPAANPPPPASGPQPPPVTAAPPVP) are enriched in pro residues.

Belongs to the UPF0182 family.

The protein resides in the cell membrane. This is UPF0182 protein Mb3215c from Mycobacterium bovis (strain ATCC BAA-935 / AF2122/97).